Reading from the N-terminus, the 37-residue chain is METVAYIGLGLCVLGVCLISWGLWDLARIIKSLHDTK.

In Escherichia phage T7 (Bacteriophage T7), this protein is Protein 6.3.